Here is a 600-residue protein sequence, read N- to C-terminus: Pentatricopeptide repeat-containing protein At3g29230 (600 aa).

PPR repeat units lie at residues 50–80, 81–115, 116–150, 151–183, 184–218, 219–245, 246–276, 279–313, 314–348, 349–379, 380–414, 415–445, and 451–481; these read DLHIAPKLISALSLCRQTNLAVRVFNQVQEP, NVHLCNSLIRAHAQNSQPYQAFFVFSEMQRFGLFA, DNFTYPFLLKACSGQSWLPVVKMMHNHIEKLGLSS, DIYVPNALIDCYSRCGGLGVRDAMKLFEKMSER, DTVSWNSMLGGLVKAGELRDARRLFDEMPQRDLIS, WNTMLDGYARCREMSKAFELFEKMPER, NTVSWSTMVMGYSKAGDMEMARVMFDKMPLP, NVVTWTIIIAGYAEKGLLKEADRLVDQMVASGLKF, DAAAVISILAACTESGLLSLGMRIHSILKRSNLGS, NAYVLNALLDMYAKCGNLKKAFDVFNDIPKK, DLVSWNTMLHGLGVHGHGKEAIELFSRMRREGIRP, DKVTFIAVLCSCNHAGLIDEGIDYFYSMEKV, and QVEHYGCLVDLLGRVGRLKEAIKVVQTMPME. Positions 486 to 561 are type E motif; it reads IWGALLGACR…PSGASSVELE (76 aa). The type E(+) motif stretch occupies residues 562 to 592; it reads DGIHEFTVFDKSHPKSDQIYQMLGSLIEPPD.

The protein belongs to the PPR family. PCMP-E subfamily.

This Arabidopsis thaliana (Mouse-ear cress) protein is Pentatricopeptide repeat-containing protein At3g29230 (PCMP-E27).